Consider the following 250-residue polypeptide: tRNA (guanine-N(1)-)-methyltransferase (250 aa).

Residues Gly113 and 133 to 138 (IGDYVL) each bind S-adenosyl-L-methionine.

The protein belongs to the RNA methyltransferase TrmD family. As to quaternary structure, homodimer.

It is found in the cytoplasm. The enzyme catalyses guanosine(37) in tRNA + S-adenosyl-L-methionine = N(1)-methylguanosine(37) in tRNA + S-adenosyl-L-homocysteine + H(+). Its function is as follows. Specifically methylates guanosine-37 in various tRNAs. The chain is tRNA (guanine-N(1)-)-methyltransferase from Photorhabdus laumondii subsp. laumondii (strain DSM 15139 / CIP 105565 / TT01) (Photorhabdus luminescens subsp. laumondii).